We begin with the raw amino-acid sequence, 495 residues long: BUB3-interacting and GLEBS motif-containing protein ZNF207 (495 aa).

The tract at residues 1–92 (MGRKKKKQLK…EGIPEKDMDE (92 aa)) is microtubule-binding region. 2 C2H2-type zinc fingers span residues 11–34 (PWCW…KAKH) and 35–58 (FKCH…MQVH). A compositionally biased stretch (basic and acidic residues) spans 99 to 111 (QKTQESQKKKQQD). Disordered regions lie at residues 99-161 (QKTQ…PGIP), 252-292 (PPAP…SNSE), and 316-372 (VGTD…ATLT). Positions 112–121 (DSDEYDDDES) are enriched in acidic residues. Polar residues predominate over residues 127–136 (FQPQPVQPQQ). Positions 142–161 (MAQPGLPPVPGAPGMPPGIP) are enriched in pro residues. 2 stretches are compositionally biased toward low complexity: residues 283–292 (SSSTASSNSE) and 326–372 (TPAA…ATLT). The tract at residues 376-408 (ATSKLIHPDEDISLEERRAQLPKYQRNLPRPGQ) is GLEBS. A disordered region spans residues 462 to 495 (PYGQGPPMVPPYQGGPPRPPMGMRPPVMSQGGRY). Residues 464-484 (GQGPPMVPPYQGGPPRPPMGM) are compositionally biased toward pro residues.

As to quaternary structure, interacts (via GLEBS region) with BUB3. In day-13 embryo, strongly expressed in the nervous system (brain, spinal cord and dorsal root ganglia), with strong to weak expression in other regions. Continues to be strongly expressed in the neonatal brain while expression is weak in the brain and spinal cord of adult.

It is found in the nucleus. It localises to the chromosome. The protein localises to the centromere. Its subcellular location is the kinetochore. The protein resides in the cytoplasm. It is found in the cytoskeleton. It localises to the spindle. In terms of biological role, kinetochore- and microtubule-binding protein that plays a key role in spindle assembly. ZNF207/BuGZ is mainly composed of disordered low-complexity regions and undergoes phase transition or coacervation to form temperature-dependent liquid droplets. Coacervation promotes microtubule bundling and concentrates tubulin, promoting microtubule polymerization and assembly of spindle and spindle matrix by concentrating its building blocks. Also acts as a regulator of mitotic chromosome alignment by mediating the stability and kinetochore loading of BUB3. Mechanisms by which BUB3 is protected are unclear: according to a first report, ZNF207/BuGZ may act by blocking ubiquitination and proteasomal degradation of BUB3. According to another report, the stabilization is independent of the proteasome. The chain is BUB3-interacting and GLEBS motif-containing protein ZNF207 from Mus musculus (Mouse).